The chain runs to 133 residues: Small ribosomal subunit protein eS8 (133 aa).

A disordered region spans residues 1–31; the sequence is MGFYQGPDNRKITGGLKGKHRDKRKYEIGNP.

This sequence belongs to the eukaryotic ribosomal protein eS8 family. As to quaternary structure, part of the 30S ribosomal subunit.

The sequence is that of Small ribosomal subunit protein eS8 from Saccharolobus solfataricus (strain ATCC 35092 / DSM 1617 / JCM 11322 / P2) (Sulfolobus solfataricus).